The sequence spans 242 residues: Phosphoribosylaminoimidazole-succinocarboxamide synthase (242 aa).

It belongs to the SAICAR synthetase family.

The enzyme catalyses 5-amino-1-(5-phospho-D-ribosyl)imidazole-4-carboxylate + L-aspartate + ATP = (2S)-2-[5-amino-1-(5-phospho-beta-D-ribosyl)imidazole-4-carboxamido]succinate + ADP + phosphate + 2 H(+). The protein operates within purine metabolism; IMP biosynthesis via de novo pathway; 5-amino-1-(5-phospho-D-ribosyl)imidazole-4-carboxamide from 5-amino-1-(5-phospho-D-ribosyl)imidazole-4-carboxylate: step 1/2. This chain is Phosphoribosylaminoimidazole-succinocarboxamide synthase (purC), found in Methanocaldococcus jannaschii (strain ATCC 43067 / DSM 2661 / JAL-1 / JCM 10045 / NBRC 100440) (Methanococcus jannaschii).